The chain runs to 267 residues: Methylglyoxal reductase DkgB (267 aa).

Tyrosine 39 acts as the Proton donor in catalysis. Position 97 (histidine 97) interacts with substrate. 179 to 231 (MTLAYGKALAEPVIKTIAEQHGATPAQVILSWAMQLGYGVIPSSTKAANLASN) provides a ligand contact to NADP(+).

The protein belongs to the aldo/keto reductase family. Monomer.

Its subcellular location is the cytoplasm. The catalysed reaction is hydroxyacetone + NADP(+) = methylglyoxal + NADPH + H(+). Its function is as follows. Aldo-keto reductase that significantly contributes to cellular methylglyoxal detoxification by catalyzing the NADPH-dependent conversion of methylglyoxal to acetol. In Yersinia pestis, this protein is Methylglyoxal reductase DkgB.